Here is a 255-residue protein sequence, read N- to C-terminus: 3-deoxy-manno-octulosonate cytidylyltransferase (255 aa).

This sequence belongs to the KdsB family.

Its subcellular location is the cytoplasm. The enzyme catalyses 3-deoxy-alpha-D-manno-oct-2-ulosonate + CTP = CMP-3-deoxy-beta-D-manno-octulosonate + diphosphate. Its pathway is nucleotide-sugar biosynthesis; CMP-3-deoxy-D-manno-octulosonate biosynthesis; CMP-3-deoxy-D-manno-octulosonate from 3-deoxy-D-manno-octulosonate and CTP: step 1/1. It functions in the pathway bacterial outer membrane biogenesis; lipopolysaccharide biosynthesis. In terms of biological role, activates KDO (a required 8-carbon sugar) for incorporation into bacterial lipopolysaccharide in Gram-negative bacteria. The polypeptide is 3-deoxy-manno-octulosonate cytidylyltransferase (Saccharophagus degradans (strain 2-40 / ATCC 43961 / DSM 17024)).